Here is a 784-residue protein sequence, read N- to C-terminus: E3 UFM1-protein ligase 1 homolog (784 aa).

The interval 401–481 (QKGNSSAQDL…GGGGGGNKKT (81 aa)) is disordered.

This sequence belongs to the UFL1 family.

In terms of biological role, E3 UFM1-protein ligase that mediates ufmylation of target proteins. The protein is E3 UFM1-protein ligase 1 homolog of Drosophila ananassae (Fruit fly).